A 155-amino-acid chain; its full sequence is Alanine- and arginine-rich domain-containing protein (155 aa).

This Homo sapiens (Human) protein is Alanine- and arginine-rich domain-containing protein (AARD).